Consider the following 455-residue polypeptide: Zinc finger and BTB domain-containing protein 8A.2 (455 aa).

The 69-residue stretch at 24-92 (CDCHIMIDGH…MYSGKLNLSG (69 aa)) folds into the BTB domain. 2 consecutive C2H2-type zinc fingers follow at residues 299–321 (FKCP…LLCH) and 327–350 (YPCQ…RTIH).

Its subcellular location is the nucleus. Its function is as follows. May be involved in transcriptional regulation. The chain is Zinc finger and BTB domain-containing protein 8A.2 (zbtb8a.2) from Xenopus tropicalis (Western clawed frog).